An 838-amino-acid chain; its full sequence is G-protein coupled receptor-associated sorting protein 2 (838 aa).

4 disordered regions span residues 1–122 (MTGA…GARP), 218–292 (ASNE…SNPF), 349–368 (RFRHRDKEDPNTALKLRAQK), and 531–552 (LELSPEGEEQESLLQPDQPSPE). Over residues 13–31 (KPEKKAGEEVIAGPEREND) the composition is skewed to basic and acidic residues. Residues 220–245 (NESGFWSADETSTASSFWTGEETSVR) are compositionally biased toward polar residues. Residues 255–271 (RSRHRAKHQTNPRSRPR) are compositionally biased toward basic residues. 2 positions are modified to phosphoserine: S282 and S284. Positions 542-552 (SLLQPDQPSPE) are enriched in polar residues.

Belongs to the GPRASP family. In terms of assembly, interacts with cytoplasmic tails of a variety of G-protein coupled receptors such as muscarinic acetylcholine receptor M1/CHRM1 and calcitonin receptor/CALCR. As to expression, expressed in the brain.

In terms of biological role, may play a role in regulation of a variety of G-protein coupled receptors. In Homo sapiens (Human), this protein is G-protein coupled receptor-associated sorting protein 2 (GPRASP2).